The following is a 159-amino-acid chain: Large ribosomal subunit protein uL10 (159 aa).

It belongs to the universal ribosomal protein uL10 family. Part of the ribosomal stalk of the 50S ribosomal subunit. The N-terminus interacts with L11 and the large rRNA to form the base of the stalk. The C-terminus forms an elongated spine to which L12 dimers bind in a sequential fashion forming a multimeric L10(L12)X complex.

Its function is as follows. Forms part of the ribosomal stalk, playing a central role in the interaction of the ribosome with GTP-bound translation factors. In Nautilia profundicola (strain ATCC BAA-1463 / DSM 18972 / AmH), this protein is Large ribosomal subunit protein uL10.